The following is a 351-amino-acid chain: Ion-translocating oxidoreductase complex subunit D (351 aa).

Helical transmembrane passes span 18–38 (IMLL…YFFG), 42–62 (LIQV…VLHL), 87–107 (LPPL…IIIA), and 121–141 (PAMV…TSWL). At Thr185 the chain carries FMN phosphoryl threonine. 5 consecutive transmembrane segments (helical) span residues 212 to 232 (LAGI…LLLL), 241 to 261 (IPVS…MIAP), 264 to 284 (FAPP…FFIA), 298 to 318 (LIFG…GGYP), and 320 to 340 (GVAF…HYTQ).

Belongs to the NqrB/RnfD family. As to quaternary structure, the complex is composed of six subunits: RnfA, RnfB, RnfC, RnfD, RnfE and RnfG. FMN is required as a cofactor.

The protein resides in the cell inner membrane. In terms of biological role, part of a membrane-bound complex that couples electron transfer with translocation of ions across the membrane. This is Ion-translocating oxidoreductase complex subunit D from Yersinia enterocolitica serotype O:8 / biotype 1B (strain NCTC 13174 / 8081).